We begin with the raw amino-acid sequence, 74 residues long: Serine rich endogenous peptide 16 (74 aa).

The first 31 residues, Met1 to Ala31, serve as a signal peptide directing secretion. Residues Thr29–Pro74 form a disordered region. The segment covering Pro42 to Tyr62 has biased composition (pro residues). The SCOOP motif signature appears at Arg60 to Pro74. A SxS motif essential for MIK2 binding motif is present at residues Ser66–Ser68.

This sequence belongs to the serine rich endogenous peptide (SCOOP) phytocytokine family. As to quaternary structure, interacts with MIK2 (via extracellular leucine-rich repeat domain); this interaction triggers the formation of complex between MIK2 and the BAK1/SERK3 and SERK4 coreceptors, and subsequent BAK1 activation by phosphorylation.

Its subcellular location is the cell membrane. The protein resides in the secreted. It is found in the extracellular space. The protein localises to the apoplast. Functionally, brassicaceae-specific phytocytokine (plant endogenous peptide released into the apoplast) perceived by MIK2 in a BAK1/SERK3 and SERK4 coreceptors-dependent manner, that modulates various physiological and antimicrobial processes including growth prevention and reactive oxygen species (ROS) response regulation. The sequence is that of Serine rich endogenous peptide 16 from Arabidopsis thaliana (Mouse-ear cress).